The following is a 78-amino-acid chain: Large ribosomal subunit protein bL28 (78 aa).

Belongs to the bacterial ribosomal protein bL28 family.

This chain is Large ribosomal subunit protein bL28 (rpmB), found in Xylella fastidiosa (strain 9a5c).